Here is a 288-residue protein sequence, read N- to C-terminus: Polyamine aminopropyltransferase (288 aa).

One can recognise a PABS domain in the interval 9 to 242 (SGWLDEYHQG…GLWSWAFASM (234 aa)). Gln-36 is a binding site for S-methyl-5'-thioadenosine. Spermidine is bound by residues His-67 and Asp-91. S-methyl-5'-thioadenosine contacts are provided by residues Glu-111 and 143–144 (NG). The active-site Proton acceptor is Asp-162. Pro-169 lines the S-methyl-5'-thioadenosine pocket.

It belongs to the spermidine/spermine synthase family. As to quaternary structure, homodimer or homotetramer.

Its subcellular location is the cytoplasm. It carries out the reaction S-adenosyl 3-(methylsulfanyl)propylamine + putrescine = S-methyl-5'-thioadenosine + spermidine + H(+). It functions in the pathway amine and polyamine biosynthesis; spermidine biosynthesis; spermidine from putrescine: step 1/1. Functionally, catalyzes the irreversible transfer of a propylamine group from the amino donor S-adenosylmethioninamine (decarboxy-AdoMet) to putrescine (1,4-diaminobutane) to yield spermidine. The protein is Polyamine aminopropyltransferase of Prochlorococcus marinus (strain NATL1A).